The sequence spans 263 residues: Indolethylamine N-methyltransferase (263 aa).

Lys-13 is modified (N6-succinyllysine). S-adenosyl-L-methionine contacts are provided by residues Tyr-20, Tyr-25, Gly-63, Tyr-69, 85 to 87, and Asn-90; that span reads DFT. Lys-96 is modified (N6-succinyllysine). S-adenosyl-L-methionine contacts are provided by residues 142-143 and Leu-163; that span reads DV.

Belongs to the class I-like SAM-binding methyltransferase superfamily. NNMT/PNMT/TEMT family. Monomer. As to expression, widely expressed. The highest levels were in thyroid, adrenal gland, adult and fetal lung. Intermediate levels in heart, placenta, skeletal muscle, testis, small intestine, pancreas, stomach, spinal cord, lymph node and trachea. Very low levels in adult and fetal kidney and liver, in adult spleen, thymus, ovary, colon and bone marrow. Not expressed in peripheral blood leukocytes and brain.

The protein localises to the cytoplasm. The enzyme catalyses a tertiary amine + S-adenosyl-L-methionine = a methylated tertiary amine + S-adenosyl-L-homocysteine + H(+). The catalysed reaction is a secondary amine + S-adenosyl-L-methionine = a methylated secondary amine + S-adenosyl-L-homocysteine + H(+). It carries out the reaction a primary amine + S-adenosyl-L-methionine = a methylated primary amine + S-adenosyl-L-homocysteine + H(+). It catalyses the reaction dimethyl sulfide + S-adenosyl-L-methionine = trimethylsulfonium + S-adenosyl-L-homocysteine. In terms of biological role, functions as a thioether S-methyltransferase and is active with a variety of thioethers and the corresponding selenium and tellurium compounds, including 3-methylthiopropionaldehyde, dimethyl selenide, dimethyl telluride, 2-methylthioethylamine, 2-methylthioethanol, methyl-n-propyl sulfide and diethyl sulfide. Plays an important role in the detoxification of selenium compounds. Catalyzes the N-methylation of tryptamine and structurally related compounds. This Homo sapiens (Human) protein is Indolethylamine N-methyltransferase (INMT).